The chain runs to 398 residues: Cytochrome b561 and DOMON domain-containing protein At3g61750 (398 aa).

A signal peptide spans 1-23; that stretch reads MKTLVGFYILCFLIGQDLPFLAA. Positions 64 to 177 constitute a DOMON domain; sequence NTFVLRYSEN…PRRAVILAFS (114 aa). The 194-residue stretch at 184–377 folds into the Cytochrome b561 domain; it reads LGRLTKHDDK…LEIFRIRGTI (194 aa). Residue histidine 220 coordinates heme b. The next 2 helical transmembrane spans lie at 222-242 and 252-272; these read VMAI…ARYL and LHIG…ILGI. Heme b-binding residues include histidine 253 and histidine 285. Transmembrane regions (helical) follow at residues 287–307, 320–340, and 351–371; these read GIGI…FARP, YHHW…VLGI, and KIGY…LEIF. Histidine 321 provides a ligand contact to heme b.

It depends on heme b as a cofactor.

It is found in the membrane. May act as a catecholamine-responsive trans-membrane electron transporter. The polypeptide is Cytochrome b561 and DOMON domain-containing protein At3g61750 (Arabidopsis thaliana (Mouse-ear cress)).